Reading from the N-terminus, the 399-residue chain is Leu/Ile/Val-binding protein homolog 7 (399 aa).

A signal peptide spans 1–22; sequence MEKHLIALSVAALLAGAAPASA.

The protein belongs to the leucine-binding protein family.

Component of an amino-acid transport system. The sequence is that of Leu/Ile/Val-binding protein homolog 7 from Brucella melitensis biotype 1 (strain ATCC 23456 / CCUG 17765 / NCTC 10094 / 16M).